Here is a 55-residue protein sequence, read N- to C-terminus: ATP synthase F(0) complex subunit 8 (55 aa).

Residues 7-24 (NPWFYIMLMSWLTFSLII) form a helical membrane-spanning segment. The segment at 35 to 55 (NPPSNKTSTTTRTLPWTWPWT) is disordered. Low complexity predominate over residues 41 to 55 (TSTTTRTLPWTWPWT).

Belongs to the ATPase protein 8 family. As to quaternary structure, component of the ATP synthase complex composed at least of ATP5F1A/subunit alpha, ATP5F1B/subunit beta, ATP5MC1/subunit c (homooctomer), MT-ATP6/subunit a, MT-ATP8/subunit 8, ATP5ME/subunit e, ATP5MF/subunit f, ATP5MG/subunit g, ATP5MK/subunit k, ATP5MJ/subunit j, ATP5F1C/subunit gamma, ATP5F1D/subunit delta, ATP5F1E/subunit epsilon, ATP5PF/subunit F6, ATP5PB/subunit b, ATP5PD/subunit d, ATP5PO/subunit OSCP. ATP synthase complex consists of a soluble F(1) head domain (subunits alpha(3) and beta(3)) - the catalytic core - and a membrane F(0) domain - the membrane proton channel (subunits c, a, 8, e, f, g, k and j). These two domains are linked by a central stalk (subunits gamma, delta, and epsilon) rotating inside the F1 region and a stationary peripheral stalk (subunits F6, b, d, and OSCP).

The protein resides in the mitochondrion membrane. Subunit 8, of the mitochondrial membrane ATP synthase complex (F(1)F(0) ATP synthase or Complex V) that produces ATP from ADP in the presence of a proton gradient across the membrane which is generated by electron transport complexes of the respiratory chain. ATP synthase complex consist of a soluble F(1) head domain - the catalytic core - and a membrane F(1) domain - the membrane proton channel. These two domains are linked by a central stalk rotating inside the F(1) region and a stationary peripheral stalk. During catalysis, ATP synthesis in the catalytic domain of F(1) is coupled via a rotary mechanism of the central stalk subunits to proton translocation. In vivo, can only synthesize ATP although its ATP hydrolase activity can be activated artificially in vitro. Part of the complex F(0) domain. The protein is ATP synthase F(0) complex subunit 8 of Corythaixoides concolor (Grey go-away-bird).